A 95-amino-acid chain; its full sequence is Integration host factor subunit beta (95 aa).

This sequence belongs to the bacterial histone-like protein family. As to quaternary structure, heterodimer of an alpha and a beta chain.

Its function is as follows. This protein is one of the two subunits of integration host factor, a specific DNA-binding protein that functions in genetic recombination as well as in transcriptional and translational control. The polypeptide is Integration host factor subunit beta (Shewanella amazonensis (strain ATCC BAA-1098 / SB2B)).